Consider the following 82-residue polypeptide: Small ribosomal subunit protein eS27B (82 aa).

The C4-type zinc finger occupies 37–59; sequence CPGCLNITTVFSHAQTAVTCESC.

Belongs to the eukaryotic ribosomal protein eS27 family. In terms of assembly, component of the small ribosomal subunit (SSU). Mature yeast ribosomes consist of a small (40S) and a large (60S) subunit. The 40S small subunit contains 1 molecule of ribosomal RNA (18S rRNA) and 33 different proteins (encoded by 57 genes). The large 60S subunit contains 3 rRNA molecules (25S, 5.8S and 5S rRNA) and 46 different proteins (encoded by 81 genes). Zn(2+) serves as cofactor. The N-terminus is not modified.

The protein localises to the cytoplasm. Functionally, component of the ribosome, a large ribonucleoprotein complex responsible for the synthesis of proteins in the cell. The small ribosomal subunit (SSU) binds messenger RNAs (mRNAs) and translates the encoded message by selecting cognate aminoacyl-transfer RNA (tRNA) molecules. The large subunit (LSU) contains the ribosomal catalytic site termed the peptidyl transferase center (PTC), which catalyzes the formation of peptide bonds, thereby polymerizing the amino acids delivered by tRNAs into a polypeptide chain. The nascent polypeptides leave the ribosome through a tunnel in the LSU and interact with protein factors that function in enzymatic processing, targeting, and the membrane insertion of nascent chains at the exit of the ribosomal tunnel. In Saccharomyces cerevisiae (strain ATCC 204508 / S288c) (Baker's yeast), this protein is Small ribosomal subunit protein eS27B.